The primary structure comprises 303 residues: Cobalamin biosynthesis protein CobD (303 aa).

Helical transmembrane passes span 65 to 85, 147 to 167, 235 to 255, and 283 to 303; these read LLAW…IVLL, DAVF…VVLY, AGPV…GAAI, and LVWA…WLYA.

It belongs to the CobD/CbiB family.

The protein localises to the cell membrane. It functions in the pathway cofactor biosynthesis; adenosylcobalamin biosynthesis. Functionally, converts cobyric acid to cobinamide by the addition of aminopropanol on the F carboxylic group. This chain is Cobalamin biosynthesis protein CobD, found in Stutzerimonas stutzeri (strain A1501) (Pseudomonas stutzeri).